We begin with the raw amino-acid sequence, 496 residues long: UDP-N-acetylmuramoylalanine--D-glutamate ligase (496 aa).

130 to 136 (GTNGKTT) is an ATP binding site.

It belongs to the MurCDEF family.

It is found in the cytoplasm. The catalysed reaction is UDP-N-acetyl-alpha-D-muramoyl-L-alanine + D-glutamate + ATP = UDP-N-acetyl-alpha-D-muramoyl-L-alanyl-D-glutamate + ADP + phosphate + H(+). Its pathway is cell wall biogenesis; peptidoglycan biosynthesis. Functionally, cell wall formation. Catalyzes the addition of glutamate to the nucleotide precursor UDP-N-acetylmuramoyl-L-alanine (UMA). This chain is UDP-N-acetylmuramoylalanine--D-glutamate ligase, found in Mycobacterium bovis (strain ATCC BAA-935 / AF2122/97).